A 129-amino-acid chain; its full sequence is Glycine cleavage system H protein (129 aa).

In terms of domain architecture, Lipoyl-binding spans 24–106; sequence SYTVGITEHA…YGDGWFFRIM (83 aa). Residue lysine 65 is modified to N6-lipoyllysine.

Belongs to the GcvH family. In terms of assembly, the glycine cleavage system is composed of four proteins: P, T, L and H. Requires (R)-lipoate as cofactor.

In terms of biological role, the glycine cleavage system catalyzes the degradation of glycine. The H protein shuttles the methylamine group of glycine from the P protein to the T protein. The polypeptide is Glycine cleavage system H protein (Shewanella denitrificans (strain OS217 / ATCC BAA-1090 / DSM 15013)).